We begin with the raw amino-acid sequence, 317 residues long: L-lactate dehydrogenase (317 aa).

Residues Val-17, Asp-38, Lys-43, Tyr-68, and 82–83 (GV) each bind NAD(+). Arg-91 serves as a coordination point for substrate. Residues Ser-104, 121-123 (VSN), and Ser-146 each bind NAD(+). Position 123 to 126 (123 to 126 (NPVD)) interacts with substrate. 151 to 154 (DTSR) contributes to the substrate binding site. Beta-D-fructose 1,6-bisphosphate is bound by residues Lys-156 and His-171. Catalysis depends on His-178, which acts as the Proton acceptor. Position 224 is a phosphotyrosine (Tyr-224). Residue Thr-233 participates in substrate binding.

This sequence belongs to the LDH/MDH superfamily. LDH family. In terms of assembly, homotetramer.

It is found in the cytoplasm. The catalysed reaction is (S)-lactate + NAD(+) = pyruvate + NADH + H(+). The protein operates within fermentation; pyruvate fermentation to lactate; (S)-lactate from pyruvate: step 1/1. Allosterically activated by fructose 1,6-bisphosphate (FBP). Catalyzes the conversion of lactate to pyruvate. This Clostridium perfringens (strain ATCC 13124 / DSM 756 / JCM 1290 / NCIMB 6125 / NCTC 8237 / Type A) protein is L-lactate dehydrogenase.